The sequence spans 793 residues: MAGWIQAQQLQGDALRQMQVLYGQHFPIEVRHYLAQWIESQPWDAIDLDNPQDRGQATQLLEGLVQELQKKAEHQVGEDGFVLKIKLGHYATQLQNTYDRCPMELVRCIRHILYNEQRLVREANNCSSPAGVLVDAMSQKHLQINQTFEELRLITQDTESELKKLQQTQEYFIIQYQESLRIQAQFGQLAQLNPQERMSRETALQQKQVSLETWLQREAQTLQQYRVELVEKHQKTLQLLRKQQTIILDDELIQWKRGQQLAGNGGPPEGSLDVLQSWCEKLAEIIWQNRQQIRRAEHLCQQLPIPGPVEEMLAEVNATITDIISALVTSTFIIEKQPPQVLKTQTKFAATVRLLVGGKLNVHMNPPQVKATIISEQQAKSLLKNENTRNDYSGEILNNCCVMEYHQATGTLSAHFRNMSLKRIKRADRRGAESVTEEKFTVLFESQFSVGSNELVFQVKTLSLPVVVIVHGSQDHNATATVLWDNAFAEPGRVPFAVPDKVLWPQLCEALNMKFKAEVQSNRGLTKENLVFLAQKLFNRRSNHLEDYNSMSVSWSQFNRENLPGWNYTFWQWFDGVMEVLKKHHKPHWNDGAILGFVNKQQAHDLLINKPDGTFLLRFSDSEIGGITIAWKFDSPDRNLWNLKPFTTRDFSIRSLADRLGDLNYLIYVFPDRPKDEVFAKYYTPVLAKAVDGYVKPQIKQVVPEFVNASADAGANATYMDQAPSPVVCPQAHYNMYPPNPDPVLDQDGEFDLDETMDVARHVEELLRRPMDSLDPRLSPPAGLFTSARSSLS.

Tyrosine 90 bears the Phosphotyrosine mark. Residue serine 128 is modified to Phosphoserine. An SH2 domain is found at 589-686; sequence WNDGAILGFV…EVFAKYYTPV (98 aa). At tyrosine 682 the chain carries Phosphotyrosine. Tyrosine 694 carries the phosphotyrosine; by JAK2 modification. The disordered stretch occupies residues 772–793; the sequence is DSLDPRLSPPAGLFTSARSSLS. Serine 779 bears the Phosphoserine mark.

This sequence belongs to the transcription factor STAT family. In terms of assembly, forms a homodimer or a heterodimer with a related family member. Binds NR3C1. Interacts with NCOA1 and SOCS7. Interacts with ERBB4. Interacts with EBF4. In terms of processing, ISGylated. Post-translationally, tyrosine phosphorylated in response to KITLG/SCF, IL2, IL3, IL7, IL15, CSF2/GMCSF, GH1, PRL, EPO and THPO. Activated KIT promotes phosphorylation on tyrosine residues and subsequent translocation to the nucleus. Tyrosine phosphorylated in response to constitutively activated FGFR1, FGFR2, FGFR3 and FGFR4. Tyrosine phosphorylation is required for DNA-binding activity and dimerization. Serine phosphorylation is also required for maximal transcriptional activity. Tyrosine phosphorylated in response to signaling via activated FLT3; wild-type FLT3 results in much weaker phosphorylation than constitutively activated mutant FLT3. Alternatively, can be phosphorylated by JAK2 at Tyr-694. Expressed in heart, lung, and weakly in muscle.

Its subcellular location is the cytoplasm. The protein localises to the nucleus. Functionally, carries out a dual function: signal transduction and activation of transcription. Mediates cellular responses to the cytokine KITLG/SCF and other growth factors. May mediate cellular responses to activated FGFR1, FGFR2, FGFR3 and FGFR4. Binds to the GAS element and activates PRL-induced transcription. Regulates the expression of milk proteins during lactation. This is Signal transducer and activator of transcription 5A (Stat5a) from Rattus norvegicus (Rat).